Reading from the N-terminus, the 233-residue chain is Large ribosomal subunit protein uL1 (233 aa).

The protein belongs to the universal ribosomal protein uL1 family. As to quaternary structure, part of the 50S ribosomal subunit.

Functionally, binds directly to 23S rRNA. The L1 stalk is quite mobile in the ribosome, and is involved in E site tRNA release. Its function is as follows. Protein L1 is also a translational repressor protein, it controls the translation of the L11 operon by binding to its mRNA. The protein is Large ribosomal subunit protein uL1 of Geobacillus thermodenitrificans (strain NG80-2).